A 198-amino-acid polypeptide reads, in one-letter code: MTLSVGGIDEAGRGPVVGPLVLAIVVGDSEALSKIGVRDSKSLSPRAREVLYGKILEMAVCVNYAVVEPYEIDLHVSRGMLNALEMKYAAKLMELCPADLYYVDSPDVKAARFGDGLSFLTGRRVVSLHKGEAVPQVAAASIVAKVVRDRLVEMLRKEVGDFGSGYPSDRKTREWLRGGRIPHECVRWSWETVGKLFK.

The RNase H type-2 domain occupies 3–198 (LSVGGIDEAG…SWETVGKLFK (196 aa)). Residues Asp-9, Glu-10, and Asp-104 each coordinate a divalent metal cation.

This sequence belongs to the RNase HII family. The cofactor is Mn(2+). Mg(2+) serves as cofactor.

It localises to the cytoplasm. The catalysed reaction is Endonucleolytic cleavage to 5'-phosphomonoester.. Endonuclease that specifically degrades the RNA of RNA-DNA hybrids. The chain is Ribonuclease HII from Pyrobaculum arsenaticum (strain DSM 13514 / JCM 11321 / PZ6).